The chain runs to 270 residues: Large ribosomal subunit protein bL21m (270 aa).

A mitochondrion-targeting transit peptide spans 1-68 (MASLRCFREL…HWYRSQDRCF (68 aa)). Residues 68-113 (FSSNTKDTDEDEESSEGEDDDEEEGEDFEDSADMEVEREYSPAEKV) are disordered. Residues 75 to 101 (TDEDEESSEGEDDDEEEGEDFEDSADM) show a composition bias toward acidic residues. Basic and acidic residues predominate over residues 102–113 (EVEREYSPAEKV).

This sequence belongs to the bacterial ribosomal protein bL21 family. As to quaternary structure, component of the mitochondrial ribosome large subunit. As to expression, constitutively expressed in roots, stems, leaves, flowers, pistils and siliques.

The protein localises to the mitochondrion. Its function is as follows. This protein binds to 23S ribosomal RNA in the presence of protein L20. Required for karyogamy during female gametophyte development, when the two polar nuclei fuse to form the diploid central cell nucleus, and during double fertilization of the egg cell and the central cell. In Arabidopsis thaliana (Mouse-ear cress), this protein is Large ribosomal subunit protein bL21m.